Consider the following 443-residue polypeptide: Enolase (443 aa).

Position 167 (Q167) interacts with (2R)-2-phosphoglycerate. Residue E209 is the Proton donor of the active site. 3 residues coordinate Mg(2+): D246, E291, and D318. Residues K343, R372, S373, and K394 each contribute to the (2R)-2-phosphoglycerate site. K343 acts as the Proton acceptor in catalysis.

The protein belongs to the enolase family. In terms of assembly, component of the RNA degradosome, a multiprotein complex involved in RNA processing and mRNA degradation. Mg(2+) is required as a cofactor.

It localises to the cytoplasm. The protein localises to the secreted. Its subcellular location is the cell surface. The enzyme catalyses (2R)-2-phosphoglycerate = phosphoenolpyruvate + H2O. The protein operates within carbohydrate degradation; glycolysis; pyruvate from D-glyceraldehyde 3-phosphate: step 4/5. Functionally, catalyzes the reversible conversion of 2-phosphoglycerate (2-PG) into phosphoenolpyruvate (PEP). It is essential for the degradation of carbohydrates via glycolysis. The chain is Enolase from Wigglesworthia glossinidia brevipalpis.